A 353-amino-acid polypeptide reads, in one-letter code: Nicotinate-nucleotide--dimethylbenzimidazole phosphoribosyltransferase (353 aa).

Catalysis depends on glutamate 319, which acts as the Proton acceptor.

This sequence belongs to the CobT family.

The enzyme catalyses 5,6-dimethylbenzimidazole + nicotinate beta-D-ribonucleotide = alpha-ribazole 5'-phosphate + nicotinate + H(+). It functions in the pathway nucleoside biosynthesis; alpha-ribazole biosynthesis; alpha-ribazole from 5,6-dimethylbenzimidazole: step 1/2. Functionally, catalyzes the synthesis of alpha-ribazole-5'-phosphate from nicotinate mononucleotide (NAMN) and 5,6-dimethylbenzimidazole (DMB). This is Nicotinate-nucleotide--dimethylbenzimidazole phosphoribosyltransferase from Chlorobaculum tepidum (strain ATCC 49652 / DSM 12025 / NBRC 103806 / TLS) (Chlorobium tepidum).